The primary structure comprises 416 residues: Dihydrolipoyllysine-residue succinyltransferase component of 2-oxoglutarate dehydrogenase complex (416 aa).

The region spanning 3–78 (IVDVKVPQLS…VADEIIAKID (76 aa)) is the Lipoyl-binding domain. At lysine 44 the chain carries N6-lipoyllysine. Positions 115–152 (VAMPSAAKLMAEAGLSAGQVAGTGKDGRITKGDALAAA) constitute a Peripheral subunit-binding (PSBD) domain. Catalysis depends on residues histidine 387 and aspartate 391.

The protein belongs to the 2-oxoacid dehydrogenase family. In terms of assembly, forms a 24-polypeptide structural core with octahedral symmetry. Part of the 2-oxoglutarate dehydrogenase (OGDH) complex composed of E1 (2-oxoglutarate dehydrogenase), E2 (dihydrolipoamide succinyltransferase) and E3 (dihydrolipoamide dehydrogenase); the complex contains multiple copies of the three enzymatic components (E1, E2 and E3). The cofactor is (R)-lipoate.

It catalyses the reaction N(6)-[(R)-dihydrolipoyl]-L-lysyl-[protein] + succinyl-CoA = N(6)-[(R)-S(8)-succinyldihydrolipoyl]-L-lysyl-[protein] + CoA. It functions in the pathway amino-acid degradation; L-lysine degradation via saccharopine pathway; glutaryl-CoA from L-lysine: step 6/6. In terms of biological role, E2 component of the 2-oxoglutarate dehydrogenase (OGDH) complex which catalyzes the second step in the conversion of 2-oxoglutarate to succinyl-CoA and CO(2). This Cupriavidus necator (strain ATCC 17699 / DSM 428 / KCTC 22496 / NCIMB 10442 / H16 / Stanier 337) (Ralstonia eutropha) protein is Dihydrolipoyllysine-residue succinyltransferase component of 2-oxoglutarate dehydrogenase complex (sucB).